Consider the following 190-residue polypeptide: Elongation factor P (190 aa).

Belongs to the elongation factor P family.

It localises to the cytoplasm. Its pathway is protein biosynthesis; polypeptide chain elongation. Involved in peptide bond synthesis. Stimulates efficient translation and peptide-bond synthesis on native or reconstituted 70S ribosomes in vitro. Probably functions indirectly by altering the affinity of the ribosome for aminoacyl-tRNA, thus increasing their reactivity as acceptors for peptidyl transferase. This is Elongation factor P from Amoebophilus asiaticus (strain 5a2).